The sequence spans 252 residues: ATP synthase subunit a (252 aa).

6 helical membrane-spanning segments follow: residues 29 to 49, 87 to 107, 117 to 137, 146 to 166, 196 to 216, and 219 to 239; these read FTNV…FLFI, FFPL…IGLF, IMIT…YGFY, LFVP…IEVI, FIVS…LPLI, and VAIT…FTVL.

It belongs to the ATPase A chain family. In terms of assembly, F-type ATPases have 2 components, CF(1) - the catalytic core - and CF(0) - the membrane proton channel. CF(1) has five subunits: alpha(3), beta(3), gamma(1), delta(1), epsilon(1). CF(0) has three main subunits: a(1), b(2) and c(9-12). The alpha and beta chains form an alternating ring which encloses part of the gamma chain. CF(1) is attached to CF(0) by a central stalk formed by the gamma and epsilon chains, while a peripheral stalk is formed by the delta and b chains.

The protein resides in the cell inner membrane. In terms of biological role, key component of the proton channel; it plays a direct role in the translocation of protons across the membrane. In Bartonella henselae (strain ATCC 49882 / DSM 28221 / CCUG 30454 / Houston 1) (Rochalimaea henselae), this protein is ATP synthase subunit a.